We begin with the raw amino-acid sequence, 304 residues long: Acetyl-coenzyme A carboxylase carboxyl transferase subunit beta (304 aa).

Residues 29–298 (LWSKCESCGA…ASDVSPAAVP (270 aa)) enclose the CoA carboxyltransferase N-terminal domain. Zn(2+)-binding residues include C33, C36, C52, and C55. A C4-type zinc finger spans residues 33 to 55 (CESCGALTYTKDLRANQMVCLEC).

Belongs to the AccD/PCCB family. As to quaternary structure, acetyl-CoA carboxylase is a heterohexamer composed of biotin carboxyl carrier protein (AccB), biotin carboxylase (AccC) and two subunits each of ACCase subunit alpha (AccA) and ACCase subunit beta (AccD). Zn(2+) is required as a cofactor.

Its subcellular location is the cytoplasm. The enzyme catalyses N(6)-carboxybiotinyl-L-lysyl-[protein] + acetyl-CoA = N(6)-biotinyl-L-lysyl-[protein] + malonyl-CoA. It functions in the pathway lipid metabolism; malonyl-CoA biosynthesis; malonyl-CoA from acetyl-CoA: step 1/1. Component of the acetyl coenzyme A carboxylase (ACC) complex. Biotin carboxylase (BC) catalyzes the carboxylation of biotin on its carrier protein (BCCP) and then the CO(2) group is transferred by the transcarboxylase to acetyl-CoA to form malonyl-CoA. This is Acetyl-coenzyme A carboxylase carboxyl transferase subunit beta from Acaryochloris marina (strain MBIC 11017).